The primary structure comprises 281 residues: Pantothenate synthetase (281 aa).

An ATP-binding site is contributed by 30 to 37; it reads MGYLHEGH. His37 acts as the Proton donor in catalysis. Residue Gln61 coordinates (R)-pantoate. Gln61 contributes to the beta-alanine binding site. 147 to 150 serves as a coordination point for ATP; sequence GEKD. Gln153 contributes to the (R)-pantoate binding site. ATP is bound by residues Ile176 and 184 to 187; that span reads KSSR.

Belongs to the pantothenate synthetase family. In terms of assembly, homodimer.

Its subcellular location is the cytoplasm. It catalyses the reaction (R)-pantoate + beta-alanine + ATP = (R)-pantothenate + AMP + diphosphate + H(+). The protein operates within cofactor biosynthesis; (R)-pantothenate biosynthesis; (R)-pantothenate from (R)-pantoate and beta-alanine: step 1/1. Its function is as follows. Catalyzes the condensation of pantoate with beta-alanine in an ATP-dependent reaction via a pantoyl-adenylate intermediate. This Clostridium botulinum (strain ATCC 19397 / Type A) protein is Pantothenate synthetase.